A 444-amino-acid chain; its full sequence is 1,4-beta-D-glucan glucohydrolase (444 aa).

Glu164 acts as the Proton donor in catalysis. Glu349 (nucleophile) is an active-site residue.

It belongs to the glycosyl hydrolase 1 family. In terms of assembly, monomer.

It catalyses the reaction Hydrolysis of (1-&gt;4)-linkages in (1-&gt;4)-beta-D-glucans, to remove successive glucose units.. It carries out the reaction Hydrolysis of terminal, non-reducing beta-D-glucosyl residues with release of beta-D-glucose.. Its pathway is glycan metabolism; cellulose degradation. It functions in the pathway glycan metabolism; beta-D-glucan degradation. Its activity is regulated as follows. Activated by glucose up to 200 mM when p-nitrophenyl-beta-glucoside is used as the substrate. This activation by end product concentrations may be due to a transglycosylation activity of the enzyme. Broad substrate specificity glycosidase. Releases glucose from soluble glucooligomers, with a preference for longer oligomers; acts more readily on cellotetraose than on cellobiose. Displays similar activities towards the disaccharides lactose and cellobiose. Is also able to hydrolyze various aryl-beta-glycosides in vitro. The sequence is that of 1,4-beta-D-glucan glucohydrolase from Thermotoga neapolitana (strain ATCC 49049 / DSM 4359 / NBRC 107923 / NS-E).